We begin with the raw amino-acid sequence, 546 residues long: uncharacterized protein (546 aa).

It belongs to the IIV-6 098R family.

This is an uncharacterized protein from Aedes vexans (Inland floodwater mosquito).